The chain runs to 31 residues: Branched-chain-amino-acid aminotransferase, mitochondrial (31 aa).

Residues 1–27 (MAAAALRQIWARKFLPVPWLLCGPRRY) constitute a mitochondrion transit peptide.

This sequence belongs to the class-IV pyridoxal-phosphate-dependent aminotransferase family. Homodimer. It depends on pyridoxal 5'-phosphate as a cofactor.

It is found in the mitochondrion. The enzyme catalyses L-leucine + 2-oxoglutarate = 4-methyl-2-oxopentanoate + L-glutamate. The catalysed reaction is L-isoleucine + 2-oxoglutarate = (S)-3-methyl-2-oxopentanoate + L-glutamate. It carries out the reaction L-valine + 2-oxoglutarate = 3-methyl-2-oxobutanoate + L-glutamate. Catalyzes the first reaction in the catabolism of the essential branched chain amino acids leucine, isoleucine, and valine. May also function as a transporter of branched chain alpha-keto acids. The protein is Branched-chain-amino-acid aminotransferase, mitochondrial (BCAT2) of Sus scrofa (Pig).